Reading from the N-terminus, the 305-residue chain is Oxygen-dependent coproporphyrinogen-III oxidase (305 aa).

Serine 93 contacts substrate. Histidine 97 and histidine 107 together coordinate a divalent metal cation. The active-site Proton donor is histidine 107. 109–111 (NVR) serves as a coordination point for substrate. Residues histidine 146 and histidine 176 each coordinate a divalent metal cation. The interval 241–276 (YVEFNLVYDRGTLFGLQSGGRTESILMSLPPQVRWG) is important for dimerization. 259-261 (GGR) lines the substrate pocket.

Belongs to the aerobic coproporphyrinogen-III oxidase family. Homodimer. A divalent metal cation serves as cofactor.

The protein resides in the cytoplasm. The catalysed reaction is coproporphyrinogen III + O2 + 2 H(+) = protoporphyrinogen IX + 2 CO2 + 2 H2O. It participates in porphyrin-containing compound metabolism; protoporphyrin-IX biosynthesis; protoporphyrinogen-IX from coproporphyrinogen-III (O2 route): step 1/1. Involved in the heme biosynthesis. Catalyzes the aerobic oxidative decarboxylation of propionate groups of rings A and B of coproporphyrinogen-III to yield the vinyl groups in protoporphyrinogen-IX. The sequence is that of Oxygen-dependent coproporphyrinogen-III oxidase from Pseudomonas fluorescens (strain ATCC BAA-477 / NRRL B-23932 / Pf-5).